The sequence spans 291 residues: Acetyl-coenzyme A carboxylase carboxyl transferase subunit beta (291 aa).

The disordered stretch occupies residues 1-23; it reads MSWLSKLMPSGIRTDNTPSKKRS. The region spanning 28-291 is the CoA carboxyltransferase N-terminal domain; sequence LWEKCSNCGS…LGRQPAPEVA (264 aa). Cys32, Cys35, Cys51, and Cys54 together coordinate Zn(2+). Residues 32-54 form a C4-type zinc finger; the sequence is CSNCGSALYRPELEENLEVCPKC.

This sequence belongs to the AccD/PCCB family. In terms of assembly, acetyl-CoA carboxylase is a heterohexamer composed of biotin carboxyl carrier protein (AccB), biotin carboxylase (AccC) and two subunits each of ACCase subunit alpha (AccA) and ACCase subunit beta (AccD). The cofactor is Zn(2+).

The protein resides in the cytoplasm. It catalyses the reaction N(6)-carboxybiotinyl-L-lysyl-[protein] + acetyl-CoA = N(6)-biotinyl-L-lysyl-[protein] + malonyl-CoA. The protein operates within lipid metabolism; malonyl-CoA biosynthesis; malonyl-CoA from acetyl-CoA: step 1/1. Functionally, component of the acetyl coenzyme A carboxylase (ACC) complex. Biotin carboxylase (BC) catalyzes the carboxylation of biotin on its carrier protein (BCCP) and then the CO(2) group is transferred by the transcarboxylase to acetyl-CoA to form malonyl-CoA. The protein is Acetyl-coenzyme A carboxylase carboxyl transferase subunit beta of Stenotrophomonas maltophilia (strain K279a).